The sequence spans 255 residues: Diphthine synthase (255 aa).

Residues L9, D85, V88, 113 to 114 (SI), L164, A207, and H232 contribute to the S-adenosyl-L-methionine site.

Belongs to the diphthine synthase family. Homodimer.

It carries out the reaction 2-[(3S)-amino-3-carboxypropyl]-L-histidyl-[translation elongation factor 2] + 3 S-adenosyl-L-methionine = diphthine-[translation elongation factor 2] + 3 S-adenosyl-L-homocysteine + 3 H(+). It participates in protein modification; peptidyl-diphthamide biosynthesis. In terms of biological role, S-adenosyl-L-methionine-dependent methyltransferase that catalyzes the trimethylation of the amino group of the modified target histidine residue in translation elongation factor 2 (EF-2), to form an intermediate called diphthine. The three successive methylation reactions represent the second step of diphthamide biosynthesis. The protein is Diphthine synthase of Methanococcus maripaludis (strain DSM 14266 / JCM 13030 / NBRC 101832 / S2 / LL).